We begin with the raw amino-acid sequence, 423 residues long: Serine hydroxymethyltransferase 2 (423 aa).

Residues Leu-121 and 125–127 (GHL) contribute to the (6S)-5,6,7,8-tetrahydrofolate site. Residue Lys-230 is modified to N6-(pyridoxal phosphate)lysine. 356-358 (SPF) lines the (6S)-5,6,7,8-tetrahydrofolate pocket.

The protein belongs to the SHMT family. In terms of assembly, homodimer. The cofactor is pyridoxal 5'-phosphate.

It is found in the cytoplasm. It carries out the reaction (6R)-5,10-methylene-5,6,7,8-tetrahydrofolate + glycine + H2O = (6S)-5,6,7,8-tetrahydrofolate + L-serine. It functions in the pathway one-carbon metabolism; tetrahydrofolate interconversion. The protein operates within amino-acid biosynthesis; glycine biosynthesis; glycine from L-serine: step 1/1. Functionally, catalyzes the reversible interconversion of serine and glycine with tetrahydrofolate (THF) serving as the one-carbon carrier. This reaction serves as the major source of one-carbon groups required for the biosynthesis of purines, thymidylate, methionine, and other important biomolecules. Also exhibits THF-independent aldolase activity toward beta-hydroxyamino acids, producing glycine and aldehydes, via a retro-aldol mechanism. The sequence is that of Serine hydroxymethyltransferase 2 from Pectobacterium atrosepticum (strain SCRI 1043 / ATCC BAA-672) (Erwinia carotovora subsp. atroseptica).